A 294-amino-acid chain; its full sequence is Glyceraldehyde-3-phosphate dehydrogenase (294 aa).

The NAD(+) site is built by Asp19, Arg63, and Thr105. D-glyceraldehyde 3-phosphate contacts are provided by residues Ser134–Thr136 and Thr165. Catalysis depends on Cys135, which acts as the Nucleophile. Residues Lys169–Asn188 form a disordered region. D-glyceraldehyde 3-phosphate is bound by residues Thr194–Gly195 and Arg217.

This sequence belongs to the glyceraldehyde-3-phosphate dehydrogenase family. In terms of assembly, homotetramer.

It is found in the cytoplasm. It catalyses the reaction D-glyceraldehyde 3-phosphate + phosphate + NAD(+) = (2R)-3-phospho-glyceroyl phosphate + NADH + H(+). The protein operates within carbohydrate degradation; glycolysis; pyruvate from D-glyceraldehyde 3-phosphate: step 1/5. In terms of biological role, catalyzes the oxidative phosphorylation of glyceraldehyde 3-phosphate (G3P) to 1,3-bisphosphoglycerate (BPG) using the cofactor NAD. The first reaction step involves the formation of a hemiacetal intermediate between G3P and a cysteine residue, and this hemiacetal intermediate is then oxidized to a thioester, with concomitant reduction of NAD to NADH. The reduced NADH is then exchanged with the second NAD, and the thioester is attacked by a nucleophilic inorganic phosphate to produce BPG. The protein is Glyceraldehyde-3-phosphate dehydrogenase (gap) of Citrobacter freundii.